Consider the following 294-residue polypeptide: Ribosomal RNA small subunit methyltransferase H (294 aa).

S-adenosyl-L-methionine contacts are provided by residues 36–38, Asp55, Phe82, Asp97, and Gln104; that span reads GGH.

This sequence belongs to the methyltransferase superfamily. RsmH family.

It localises to the cytoplasm. It catalyses the reaction cytidine(1402) in 16S rRNA + S-adenosyl-L-methionine = N(4)-methylcytidine(1402) in 16S rRNA + S-adenosyl-L-homocysteine + H(+). Functionally, specifically methylates the N4 position of cytidine in position 1402 (C1402) of 16S rRNA. This is Ribosomal RNA small subunit methyltransferase H from Synechococcus sp. (strain CC9605).